The sequence spans 328 residues: Glucokinase (328 aa).

16–21 (ADIGGT) contributes to the ATP binding site.

Belongs to the bacterial glucokinase family.

Its subcellular location is the cytoplasm. The catalysed reaction is D-glucose + ATP = D-glucose 6-phosphate + ADP + H(+). The chain is Glucokinase from Neisseria meningitidis serogroup C (strain 053442).